Consider the following 218-residue polypeptide: Ras-related protein Rab-4A (218 aa).

Positions 23, 24, 25, 26, 27, 28, 42, 44, and 45 each coordinate GTP. Ser27 contacts Mg(2+). A Switch 1 motif is present at residues 44-49; the sequence is HTIGVE. Mg(2+) contacts are provided by Thr45 and Asp68. Positions 70–79 match the Switch 2 motif; sequence AGQERFRSVT. Gly71 contacts GTP. Gln72 is subject to 5-glutamyl serotonin. Residues Asn126, Lys127, Asp129, Ala157, and Leu158 each contribute to the GTP site. Ser190 is modified (phosphoserine). Ser204 carries the phosphoserine; by CDK1 modification. 2 S-geranylgeranyl cysteine lipidation sites follow: Cys216 and Cys218. Cys218 is subject to Cysteine methyl ester.

This sequence belongs to the small GTPase superfamily. Rab family. As to quaternary structure, interacts with SGSM1, SGSM2 and SGSM3. Interacts with RAB11FIP1, RABEP1, ZFYVE20 and RUFY1. Interacts (membrane-bound form) with NDRG1; the interaction involves NDRG1 in vesicular recycling of E-cadherin. Interacts (in GTP-bound form) with GRIPAP1 (via N-terminus). Interacts with RABEP1 and RBSN. Does not interact with HPS4. Does not interact with HPS4. Interacts with RABEP2; this interaction may mediate VEGFR2 cell surface expression. The cofactor is Mg(2+). Post-translationally, serotonylation of Gln-72 by TGM2 during activation and aggregation of platelets leads to constitutive activation of GTPase activity. Phosphorylated by CDK1 kinase during mitosis. As to expression, expressed in the central nervous system, including cortex, cerebellum, midbrain and spinal cord, and in the kidney, lung, liver and spleen.

Its subcellular location is the membrane. The protein localises to the cytoplasm. The protein resides in the early endosome membrane. It localises to the recycling endosome membrane. The catalysed reaction is GTP + H2O = GDP + phosphate + H(+). Regulated by guanine nucleotide exchange factors (GEFs) which promote the exchange of bound GDP for free GTP. Regulated by GTPase activating proteins (GAPs) which increase the GTP hydrolysis activity. Inhibited by GDP dissociation inhibitors (GDIs). In terms of biological role, the small GTPases Rab are key regulators of intracellular membrane trafficking, from the formation of transport vesicles to their fusion with membranes. Rabs cycle between an inactive GDP-bound form and an active GTP-bound form that is able to recruit to membranes different sets of downstream effectors directly responsible for vesicle formation, movement, tethering and fusion. RAB4A is involved in protein transport. Also plays a role in vesicular traffic. Mediates VEGFR2 endosomal trafficking to enhance VEGFR2 signaling. Acts as a regulator of platelet alpha-granule release during activation and aggregation of platelets. This is Ras-related protein Rab-4A from Mus musculus (Mouse).